Reading from the N-terminus, the 406-residue chain is uncharacterized protein (406 aa).

This is an uncharacterized protein from Connochaetes taurinus (Blue wildebeest).